Here is a 1018-residue protein sequence, read N- to C-terminus: MIPQISQAPGVVQLVLNFLQELEQQGFTGDTATSYADRLTMSTDNSIYQLLPDAVVFPRSTADVALIARLAAQERYSSLIFTPRGGGTGTNGQALNQGIIVDMSRHMNRIIEINPEEGWVRVEAGVIKDQLNQYLKPFGYFFAPELSTSNRATLGGMINTDASGQGSLVYGKTSDHVLGVRAVLLGGDILDTQPLPVELAETLGKSNTTIGRIYNTVYQRCRQQRQLIIDNFPKLNRFLTGYDLRHVFNDEMTEFDLTRILTGSEGTLAFITEARLDITRLPKVRRLVNVKYDSFDSALRNAPFMVEARALSVETVDSKVLNLAREDIVWHSVSELITDVPDQEMLGLNIVEFAGDDEALIDERVNALCARLDELIASHQAGVIGWQVCRELAGVERIYAMRKKAVGLLGNAKGAAKPIPFAEDTCVPPEHLADYIAEFRALLDSHGLSYGMFGHVDAGVLHVRPALDMCDPQQEILMKQISDDVVALTAKYGGLLWGEHGKGFRAEYSPAFFGEELFAELRKVKAAFDPHNRLNPGKICPPEGLDAPMMKVDAVKRGTFDRQIPIAVRQQWRGAMECNGNGLCFNFDARSPMCPSMKITQNRIHSPKGRATLVREWLRLLADRGVDPLKLEQELPESGVSLRTLIARTRNSWHANKGEYDFSHEVKEAMSGCLACKACSTQCPIKIDVPEFRSRFLQLYHTRYLRPLRDHLVATVESYAPLMARAPKTFNFFINQPLVRKLSEKHIGMVDLPLLSVPSLQQQMVGHRSANMTLEQLESLNAEQKARTVLVVQDPFTSYYDAQVVADFVRLVEKLGFQPVLLPFSPNGKAQHIKGFLNRFAKTAKKTADFLNRMAKLGMPMVGVDPALVLCYRDEYKLALGEERGEFNVLLANEWLASALESQPVATVSGESWYFFGHCTEVTALPGAPAQWAAIFARFGAKLENVSVGCCGMAGTYGHEAKNHENSLGIYELSWHQAMQRLPRNRCLATGYSCRSQVKRVEGTGVRHPVQALLEIIK.

Residues 48 to 281 (YQLLPDAVVF…TEARLDITRL (234 aa)) form the FAD-binding PCMH-type domain. Residues Arg-402 and His-500 each coordinate (R)-2-hydroxyglutarate. One can recognise a 4Fe-4S ferredoxin-type domain in the interval 662–695 (FSHEVKEAMSGCLACKACSTQCPIKIDVPEFRSR). 4 residues coordinate [4Fe-4S] cluster: Cys-673, Cys-676, Cys-679, and Cys-683.

In the N-terminal section; belongs to the FAD-binding oxidoreductase/transferase type 4 family. Homotetramer. Requires [4Fe-4S] cluster as cofactor. FAD serves as cofactor.

It carries out the reaction (R)-2-hydroxyglutarate + A = 2-oxoglutarate + AH2. Activity is completely inhibited by the addition of 0.5 mM Mn(2+), Ni(2+), or Co(2+) and partially inhibited by 0.5 mM Zn(2+). In terms of biological role, catalyzes the oxidation of D-2-hydroxyglutarate (D-2-HGA) to 2-oxoglutarate. Appears to be the only D2HGDH in E.coli, providing the way to recycle D-2-HGA produced during L-serine synthesis by SerA, by converting it back to 2-oxoglutarate. The physiological molecule that functions as the primary electron acceptor during D-2-HGA oxidation by YdiJ in E.coli is unknown. Shows strict substrate specificity towards D-2-HGA, since it has no detectable activity on L-2-hydroxyglutarate, L-malate, D-malate, L-lactate, D-lactate, L-tartrate, D-tartrate, L-glycerate, D-glycerate, glutarate, or pyruvate. The sequence is that of D-2-hydroxyglutarate dehydrogenase (ydiJ) from Escherichia coli (strain K12).